A 213-amino-acid chain; its full sequence is ATP-dependent Clp protease proteolytic subunit (213 aa).

Serine 114 (nucleophile) is an active-site residue. Histidine 139 is an active-site residue.

It belongs to the peptidase S14 family. Fourteen ClpP subunits assemble into 2 heptameric rings which stack back to back to give a disk-like structure with a central cavity, resembling the structure of eukaryotic proteasomes.

Its subcellular location is the cytoplasm. The catalysed reaction is Hydrolysis of proteins to small peptides in the presence of ATP and magnesium. alpha-casein is the usual test substrate. In the absence of ATP, only oligopeptides shorter than five residues are hydrolyzed (such as succinyl-Leu-Tyr-|-NHMec, and Leu-Tyr-Leu-|-Tyr-Trp, in which cleavage of the -Tyr-|-Leu- and -Tyr-|-Trp bonds also occurs).. Cleaves peptides in various proteins in a process that requires ATP hydrolysis. Has a chymotrypsin-like activity. Plays a major role in the degradation of misfolded proteins. The polypeptide is ATP-dependent Clp protease proteolytic subunit (Pseudomonas putida (strain GB-1)).